A 53-amino-acid polypeptide reads, in one-letter code: UPF0391 membrane protein msr4317 (53 aa).

Helical transmembrane passes span 4 to 24 (WIII…PALA) and 33 to 53 (ILIG…FAVT).

It belongs to the UPF0391 family.

The protein localises to the cell membrane. In Mesorhizobium japonicum (strain LMG 29417 / CECT 9101 / MAFF 303099) (Mesorhizobium loti (strain MAFF 303099)), this protein is UPF0391 membrane protein msr4317.